The sequence spans 62 residues: MCCLPVFVILLLLIASAPSVDAQPKTKDDVPLAPLHDNAKSALQHLNQRCCQTFYWCCVQGK.

The first 22 residues, 1–22, serve as a signal peptide directing secretion; the sequence is MCCLPVFVILLLLIASAPSVDA. Residues 23–49 constitute a propeptide that is removed on maturation; that stretch reads QPKTKDDVPLAPLHDNAKSALQHLNQR. Glutamine 60 carries the glutamine amide modification.

This sequence belongs to the conotoxin T superfamily. Post-translationally, contains 2 disulfide bonds that can be either 'C1-C3, C2-C4' or 'C1-C4, C2-C3', since these disulfide connectivities have been observed for conotoxins with cysteine framework V (for examples, see AC P0DQQ7 and AC P81755). In terms of tissue distribution, expressed by the venom duct.

It localises to the secreted. The protein is Conotoxin Tx5.1 of Conus textile (Cloth-of-gold cone).